The chain runs to 63 residues: DNA-directed RNA polymerase 7 kDa subunit (63 aa).

This sequence belongs to the poxviridae DNA-directed RNA polymerase 7 kDa subunit family. In terms of assembly, the DNA-dependent RNA polymerase (vRNAP) consists of eight subunits encoded by early viral genes and termed according to their apparent molecular masses Rpo147, Rpo132, Rpo35, Rpo30, Rpo22, Rpo19, Rpo18, and Rpo7. The same holoenzyme, with the addition of the transcription-specificity factor RAP94, is used for early gene expression.

The protein localises to the virion. The catalysed reaction is RNA(n) + a ribonucleoside 5'-triphosphate = RNA(n+1) + diphosphate. In terms of biological role, part of the DNA-dependent RNA polymerase which catalyzes the transcription of viral DNA into RNA using the four ribonucleoside triphosphates as substrates. Responsible for the transcription of early, intermediate and late genes. DNA-dependent RNA polymerase associates with the early transcription factor (ETF), itself composed of OPG118 and OPG134, thereby allowing the early genes transcription. Late transcription, and probably also intermediate transcription, require newly synthesized RNA polymerase. In Monkeypox virus, this protein is DNA-directed RNA polymerase 7 kDa subunit (OPG090).